Here is a 662-residue protein sequence, read N- to C-terminus: FAST kinase domain-containing protein 3, mitochondrial (662 aa).

In terms of domain architecture, RAP spans 591–649; sequence IALCIDGPKRFCSNSKHLLGKEAIKQRHLQLLGYQVVQIPYHEIGMLKSRRELVEYLQR.

This sequence belongs to the FAST kinase family. Expression detected in spleen, thymus, testis, ovary, colon, heart, smooth muscle, kidney, brain, lung, liver and white adipose tissue with highest expression in liver and thyroid.

Its subcellular location is the mitochondrion. Its function is as follows. Required for normal mitochondrial respiration. Increases steady-state levels and half-lives of a subset of mature mitochondrial mRNAs MT-ND2, MT-ND3, MT-CYTB, MT-CO2, and MT-ATP8/6. Promotes MT-CO1 mRNA translation and increases mitochondrial complex IV assembly and activity. In Homo sapiens (Human), this protein is FAST kinase domain-containing protein 3, mitochondrial (FASTKD3).